The primary structure comprises 212 residues: ER lumen protein-retaining receptor 2 (212 aa).

Residues 1–4 (MNVF) are Lumenal-facing. The chain crosses the membrane as a helical span at residues 5-24 (RLSGDLSHLAAIIILLLKIW). The Cytoplasmic portion of the chain corresponds to 25–32 (KSRSCAGI). Residues 33 to 52 (SGKSQLLFALVFTTRYLDLL) form a helical membrane-spanning segment. The interaction with the K-D-E-L motif on target proteins stretch occupies residues 47-48 (RY). The Lumenal segment spans residues 53-58 (TSFISL). A helical transmembrane segment spans residues 59-79 (YNTSMKVIYIGCAYATVYLIY). Topologically, residues 80–92 (MKFKATYDGNHDT) are cytoplasmic. The helical transmembrane segment at 93-110 (FRVEFLVVPVGGLSVLVN) threads the bilayer. Topologically, residues 111–116 (HDFSPL) are lumenal. The helical transmembrane segment at 117 to 135 (EILWTFSIYLESVAILPQL) threads the bilayer. The Cytoplasmic portion of the chain corresponds to 136–149 (FMISKTGEAETITT). A helical transmembrane segment spans residues 150–168 (HYLFFLGLYRALYLFNWIW). The segment at 159–169 (RALYLFNWIWR) is interaction with the K-D-E-L motif on target proteins. Residues 169–178 (RYSFEGFFDL) are Lumenal-facing. Residues 179–199 (IAIVAGVVQTILYCDFFYLYV) traverse the membrane as a helical segment. Residues 200–212 (TKVLKGKKLSLPA) are Cytoplasmic-facing. The interval 204–207 (KGKK) is important for recycling of cargo proteins with the sequence motif K-D-E-L from the Golgi to the endoplasmic reticulum.

This sequence belongs to the ERD2 family.

It localises to the endoplasmic reticulum membrane. Its subcellular location is the golgi apparatus membrane. The protein resides in the cytoplasmic vesicle. The protein localises to the COPI-coated vesicle membrane. Functionally, receptor for the C-terminal sequence motif K-D-E-L that is present on endoplasmic reticulum resident proteins and that mediates their recycling from the Golgi back to the endoplasmic reticulum. Binding is pH dependent, and is optimal at pH 5-5.4. The chain is ER lumen protein-retaining receptor 2 (kdelr2) from Xenopus tropicalis (Western clawed frog).